A 1348-amino-acid polypeptide reads, in one-letter code: ABC multidrug transporter atrD (1348 aa).

The span at 1-10 (MSPLETNPLS) shows a compositional bias: polar residues. The disordered stretch occupies residues 1–67 (MSPLETNPLS…HRPKSSSSNN (67 aa)). Residues 20-31 (ETSTTEEQASTP) show a composition bias toward low complexity. The N-linked (GlcNAc...) asparagine glycan is linked to Asn-99. The next 4 membrane-spanning stretches (helical) occupy residues 114 to 134 (ILIM…LPLF), 168 to 188 (YFVY…VGFI), 240 to 260 (KVGL…IAYV), and 268 to 288 (ICSS…QFII). The ABC transmembrane type-1 1 domain maps to 118-408 (VISTICAIAA…VSPNAQAFTN (291 aa)). An N-linked (GlcNAc...) asparagine glycan is attached at Asn-314. A run of 2 helical transmembrane segments spans residues 344-364 (IVMG…YGLG) and 371-391 (FLVD…AILI). The 246-residue stretch at 443–688 (IELRNVKHIY…GGAYRKLVEA (246 aa)) folds into the ABC transporter 1 domain. 478–485 (GPSGSGKS) contributes to the ATP binding site. Asn-550 is a glycosylation site (N-linked (GlcNAc...) asparagine). A run of 2 helical transmembrane segments spans residues 778-798 (MLIG…QAVL) and 825-845 (LMFF…GAAF). The ABC transmembrane type-1 2 domain occupies 779 to 1068 (LIGLVFSVLA…VFSFAPDMGK (290 aa)). A glycan (N-linked (GlcNAc...) asparagine) is linked at Asn-877. The next 4 helical transmembrane spans lie at 892–912 (HLSG…TTLG), 925–947 (LALV…FYML), 1015–1035 (ALVF…LGHH), and 1042–1062 (FFVC…VFSF). A glycan (N-linked (GlcNAc...) asparagine) is linked at Asn-1088. Positions 1103–1341 (IEFRNVHFRY…KGRYYELVNL (239 aa)) constitute an ABC transporter 2 domain. 1138 to 1145 (GPSGCGKS) provides a ligand contact to ATP.

The protein belongs to the ABC transporter superfamily. ABCB family. Multidrug resistance exporter (TC 3.A.1.201) subfamily.

The protein localises to the cell membrane. With respect to regulation, fenamirol efflux transporter activity is inhibited by the cyclosporin derivative PSC 833, nigericin, reserpine and valinomycin. The effect of reserpine is transiant, while that of the cyclosporin derivative PSC 833, nigericin and valinomycin is proportional to the time of exposure. Cyclohexinmide has inhibitory effect only when applied prior to addition of the fungicide. Its function is as follows. Pleiotropic ABC efflux transporter involved in the protection of the cells against a wide range of toxic compounds. Confers resistance to the azole fenarimol via efflux transport. May also be involved in the secretion of penicillin. This Emericella nidulans (Aspergillus nidulans) protein is ABC multidrug transporter atrD.